The primary structure comprises 194 residues: tRNA (mnm(5)s(2)U34)-methyltransferase (194 aa).

S-adenosyl-L-methionine is bound by residues His-33, Asp-34, Asp-52, Gln-54, Ser-79, and His-80.

It belongs to the methyltransferase superfamily. MnmM family. Homodimer.

It carries out the reaction 5-aminomethyl-2-thiouridine(34) in tRNA + S-adenosyl-L-methionine = 5-methylaminomethyl-2-thiouridine(34) in tRNA + S-adenosyl-L-homocysteine + H(+). It functions in the pathway tRNA modification. Its function is as follows. Involved in the biosynthesis of 5-methylaminomethyl-2-thiouridine (mnm(5)s(2)U) at the wobble position (U34) in tRNA. Catalyzes the transfer of a methyl group from S-adenosyl-L-methionine to nm(5)s(2)U34 to form mnm(5)s(2)U34. The polypeptide is tRNA (mnm(5)s(2)U34)-methyltransferase (Bacillus subtilis (strain 168)).